We begin with the raw amino-acid sequence, 325 residues long: Ubiquitin thioesterase OTU1 (325 aa).

Residues 7–86 (RIRSKTGVEN…NVSSISSNPG (80 aa)) form a UBX-like region. An OTU domain is found at 123 to 246 (ATRRVTDDDN…GIHYDALSIC (124 aa)). A cys-loop region spans residues 128-134 (TDDDNSC). The active site involves Asp131. Cys134 functions as the Nucleophile in the catalytic mechanism. The interval 185–195 (IQNPKNWGGAI) is variable-loop. The segment at 235–239 (YDGIH) is his-loop. Residue Ile238 participates in substrate binding. The active site involves His239. Positions 265 to 270 (KDSLAK) are S2 site. A C2H2-type zinc finger spans residues 292–316 (LICLNCNKTLKGEKEAAIHASTTGH). His316 is an active-site residue.

It is found in the cytoplasm. The catalysed reaction is Thiol-dependent hydrolysis of ester, thioester, amide, peptide and isopeptide bonds formed by the C-terminal Gly of ubiquitin (a 76-residue protein attached to proteins as an intracellular targeting signal).. In terms of biological role, hydrolase that can remove conjugated ubiquitin from proteins and may therefore play an important regulatory role at the level of protein turnover by preventing degradation. The polypeptide is Ubiquitin thioesterase OTU1 (yod1) (Dictyostelium discoideum (Social amoeba)).